A 279-amino-acid polypeptide reads, in one-letter code: Large ribosomal subunit protein uL2 (279 aa).

2 disordered regions span residues 29–49 and 202–279; these read PVKQ…NGRV and NASI…KKKG. Low complexity predominate over residues 36–49; the sequence is GKSSSGGRNNNGRV. Over residues 209–220 the composition is skewed to basic residues; it reads GRSRWLGRRPHN.

It belongs to the universal ribosomal protein uL2 family. Part of the 50S ribosomal subunit. Forms a bridge to the 30S subunit in the 70S ribosome.

In terms of biological role, one of the primary rRNA binding proteins. Required for association of the 30S and 50S subunits to form the 70S ribosome, for tRNA binding and peptide bond formation. It has been suggested to have peptidyltransferase activity; this is somewhat controversial. Makes several contacts with the 16S rRNA in the 70S ribosome. The polypeptide is Large ribosomal subunit protein uL2 (Beijerinckia indica subsp. indica (strain ATCC 9039 / DSM 1715 / NCIMB 8712)).